A 208-amino-acid polypeptide reads, in one-letter code: Probable Brix domain-containing ribosomal biogenesis protein (208 aa).

The 196-residue stretch at 1 to 196 (MMLITTSHRP…IWIMEDGRRW (196 aa)) folds into the Brix domain.

In terms of biological role, probably involved in the biogenesis of the ribosome. This chain is Probable Brix domain-containing ribosomal biogenesis protein, found in Thermococcus kodakarensis (strain ATCC BAA-918 / JCM 12380 / KOD1) (Pyrococcus kodakaraensis (strain KOD1)).